We begin with the raw amino-acid sequence, 245 residues long: tRNA (guanine-N(1)-)-methyltransferase (245 aa).

S-adenosyl-L-methionine-binding positions include Gly-114 and 134–139 (IGDYIL).

The protein belongs to the RNA methyltransferase TrmD family. In terms of assembly, homodimer.

Its subcellular location is the cytoplasm. The enzyme catalyses guanosine(37) in tRNA + S-adenosyl-L-methionine = N(1)-methylguanosine(37) in tRNA + S-adenosyl-L-homocysteine + H(+). In terms of biological role, specifically methylates guanosine-37 in various tRNAs. The protein is tRNA (guanine-N(1)-)-methyltransferase of Listeria welshimeri serovar 6b (strain ATCC 35897 / DSM 20650 / CCUG 15529 / CIP 8149 / NCTC 11857 / SLCC 5334 / V8).